A 122-amino-acid chain; its full sequence is Large ribosomal subunit protein uL14 (122 aa).

It belongs to the universal ribosomal protein uL14 family. As to quaternary structure, part of the 50S ribosomal subunit. Forms a cluster with proteins L3 and L19. In the 70S ribosome, L14 and L19 interact and together make contacts with the 16S rRNA in bridges B5 and B8.

Its function is as follows. Binds to 23S rRNA. Forms part of two intersubunit bridges in the 70S ribosome. The sequence is that of Large ribosomal subunit protein uL14 from Thermodesulfovibrio yellowstonii (strain ATCC 51303 / DSM 11347 / YP87).